The sequence spans 199 residues: MAP6 domain-containing protein 1 (199 aa).

S-palmitoyl cysteine attachment occurs at residues cysteine 5, cysteine 10, and cysteine 11. The disordered stretch occupies residues 33 to 110 (YSDLDSEEPG…SAQSSAPPAP (78 aa)). Position 38 is a phosphoserine (serine 38). Mn regions lie at residues 130–143 (TTSY…WTGV) and 165–177 (DSSP…VPEV). Serine 167 carries the phosphoserine modification.

This sequence belongs to the STOP family. As to quaternary structure, interacts with calmodulin. Palmitoylated. Palmitoylation enhances association with microtubules.

It is found in the golgi apparatus. It localises to the cytoplasm. Its subcellular location is the cytoskeleton. May have microtubule-stabilizing activity. This chain is MAP6 domain-containing protein 1 (MAP6D1), found in Homo sapiens (Human).